The following is a 222-amino-acid chain: UPF0502 protein XCV4380 (222 aa).

It belongs to the UPF0502 family.

This chain is UPF0502 protein XCV4380, found in Xanthomonas euvesicatoria pv. vesicatoria (strain 85-10) (Xanthomonas campestris pv. vesicatoria).